The primary structure comprises 177 residues: Antigen TpF1 (177 aa).

It belongs to the Dps family. In terms of assembly, homodecamer; either linked or stabilized by disulfide bonds.

In terms of biological role, may play an important structural role in the outer membrane. The chain is Antigen TpF1 (tpf1) from Treponema pallidum (strain Nichols).